A 412-amino-acid chain; its full sequence is Double C2-like domain-containing protein beta (412 aa).

Residues 1 to 36 (MTLRRRGEKATISIQEHMAIDVCPGPIRPIKQISDY) form a negatively regulates targeting to plasma membrane region. The interval 1–90 (MTLRRRGEKA…EDVDQLFGAY (90 aa)) is mediates interaction with DYNLT1. The disordered stretch occupies residues 38–123 (PRFPRGLPPD…PDADGYESDD (86 aa)). Positions 49–70 (GPRAAAPPDAPARPAVAGAGRR) are enriched in low complexity. The segment covering 95–108 (GPSPGPSPARPPAK) has biased composition (pro residues). Residues 112–123 (DEPDADGYESDD) are compositionally biased toward acidic residues. C2 domains follow at residues 126-250 (ALGT…SICL) and 266-399 (ERGR…ERWH). Ca(2+) contacts are provided by D157, D163, D218, D220, D297, D303, D357, D359, and D365. The tract at residues 257–375 (DKTEDKSLEE…FIGGVVLGIH (119 aa)) is mediates interaction with STXBP3. S411 is modified (phosphoserine).

In terms of assembly, interacts with the SNARE (soluble N-ethylmaleimide-sensitive factor attached protein receptor) complex composed of SNAP25, STX1A and VAMP2; the interaction is calcium-dependent and competitive with SYT1. Interacts with STX4; the interaction is calcium-dependent, increased by insulin and glucose, and mediates vesicle fusion with plasma membrane in pancreatic cells and adipocytes. Interacts with STXBP3; the interaction is direct, occurs at the cell membrane and regulates glucose-stimulated insulin secretion. May interact with UNC13A; the interaction mediates targeting to the plasma membrane. Interacts with cytoplasmic dynein light chain DYNLT1. Ca(2+) is required as a cofactor. In terms of tissue distribution, widely expressed with highest levels in brain and kidney. Expressed in pancreatic islet cells (at protein level).

The protein localises to the cytoplasm. The protein resides in the cytoplasmic granule. Its subcellular location is the cell membrane. Functionally, calcium sensor which positively regulates SNARE-dependent fusion of vesicles with membranes. Binds phospholipids in a calcium-dependent manner and may act at the priming stage of fusion by modifying membrane curvature to stimulate fusion. Involved in calcium-triggered exocytosis in chromaffin cells and calcium-dependent spontaneous release of neurotransmitter in absence of action potentials in neuronal cells. Involved both in glucose-stimulated insulin secretion in pancreatic cells and insulin-dependent GLUT4 transport to the plasma membrane in adipocytes. In Homo sapiens (Human), this protein is Double C2-like domain-containing protein beta.